Reading from the N-terminus, the 60-residue chain is Large ribosomal subunit protein uL30 (60 aa).

Belongs to the universal ribosomal protein uL30 family. Part of the 50S ribosomal subunit.

The protein is Large ribosomal subunit protein uL30 of Burkholderia ambifaria (strain MC40-6).